Reading from the N-terminus, the 63-residue chain is Sec-independent protein translocase protein TatA (63 aa).

Residues 1–21 traverse the membrane as a helical segment; it reads MGSFSMWHWLIVLVIVLLLFG. The tract at residues 42 to 63 is disordered; sequence GMTDEDAPDTAKTVDHKADETK. Residues 53–63 are compositionally biased toward basic and acidic residues; the sequence is KTVDHKADETK.

Belongs to the TatA/E family. In terms of assembly, the Tat system comprises two distinct complexes: a TatABC complex, containing multiple copies of TatA, TatB and TatC subunits, and a separate TatA complex, containing only TatA subunits. Substrates initially bind to the TatABC complex, which probably triggers association of the separate TatA complex to form the active translocon.

It localises to the cell inner membrane. In terms of biological role, part of the twin-arginine translocation (Tat) system that transports large folded proteins containing a characteristic twin-arginine motif in their signal peptide across membranes. TatA could form the protein-conducting channel of the Tat system. The protein is Sec-independent protein translocase protein TatA of Rhizobium leguminosarum bv. trifolii (strain WSM2304).